The following is a 391-amino-acid chain: Elongation factor Tu (391 aa).

The 192-residue stretch at 10–201 folds into the tr-type G domain; it reads KPHVNIGTIG…AVDDYIPTPE (192 aa). The interval 19–26 is G1; the sequence is GHVDHGKT. 19-26 provides a ligand contact to GTP; it reads GHVDHGKT. Residue threonine 26 coordinates Mg(2+). Residues 55-59 form a G2 region; it reads GITIS. Residues 76–79 are G3; sequence DCPG. Residues 76–80 and 131–134 contribute to the GTP site; these read DCPGH and NKCD. The interval 131 to 134 is G4; that stretch reads NKCD. Residues 169 to 171 are G5; the sequence is SAL.

Belongs to the TRAFAC class translation factor GTPase superfamily. Classic translation factor GTPase family. EF-Tu/EF-1A subfamily. As to quaternary structure, monomer.

It localises to the cytoplasm. It carries out the reaction GTP + H2O = GDP + phosphate + H(+). GTP hydrolase that promotes the GTP-dependent binding of aminoacyl-tRNA to the A-site of ribosomes during protein biosynthesis. The polypeptide is Elongation factor Tu (Brucella anthropi (strain ATCC 49188 / DSM 6882 / CCUG 24695 / JCM 21032 / LMG 3331 / NBRC 15819 / NCTC 12168 / Alc 37) (Ochrobactrum anthropi)).